The sequence spans 130 residues: MPKKFDDIVNEMDRKIELLGEEIIKNLNLSVEGYCTNKKDICNLVIYKNNNIIKNLESLEMYSVKALCLYRPVSKDLRKLLTIIKLCSMLEKIEECAVKISFVLLNSKFNFDRNDKYIKRMASLTEEIIY.

This is an uncharacterized protein from Methanocaldococcus jannaschii (strain ATCC 43067 / DSM 2661 / JAL-1 / JCM 10045 / NBRC 100440) (Methanococcus jannaschii).